We begin with the raw amino-acid sequence, 248 residues long: Probable transcriptional regulatory protein Atu3727 (248 aa).

The disordered stretch occupies residues 1–21; sequence MAGHSQFKNIMHRKGKQDSVR.

Belongs to the TACO1 family.

It is found in the cytoplasm. In Agrobacterium fabrum (strain C58 / ATCC 33970) (Agrobacterium tumefaciens (strain C58)), this protein is Probable transcriptional regulatory protein Atu3727.